The sequence spans 215 residues: Cytochrome b6 (215 aa).

Residues Ile32–Phe52 form a helical membrane-spanning segment. Residue Cys35 coordinates heme c. His86 and His100 together coordinate heme b. Transmembrane regions (helical) follow at residues Ala90 to Phe110, Leu116 to Tyr136, and Leu186 to Ile206. Positions 187 and 202 each coordinate heme b.

This sequence belongs to the cytochrome b family. PetB subfamily. As to quaternary structure, the 4 large subunits of the cytochrome b6-f complex are cytochrome b6, subunit IV (17 kDa polypeptide, PetD), cytochrome f and the Rieske protein, while the 4 small subunits are PetG, PetL, PetM and PetN. The complex functions as a dimer. The cofactor is heme b. Requires heme c as cofactor.

The protein resides in the plastid. The protein localises to the chloroplast thylakoid membrane. Its function is as follows. Component of the cytochrome b6-f complex, which mediates electron transfer between photosystem II (PSII) and photosystem I (PSI), cyclic electron flow around PSI, and state transitions. The polypeptide is Cytochrome b6 (Helianthus annuus (Common sunflower)).